The primary structure comprises 102 residues: Antimicrobial peptide 1 (102 aa).

The signal sequence occupies residues 1 to 26 (MASTKLFFSVITVMMLIAMASEMVNG). Disulfide bonds link Cys-37-Cys-90, Cys-47-Cys-102, and Cys-49-Cys-75.

The protein localises to the secreted. Functionally, antimicrobial peptide which inhibits the growth of a variety of fungi, oomycetes, Gram-positive bacterial phytopatogenes and S.cerevisiae in vitro. No activity against E.coli. The protein is Antimicrobial peptide 1 of Macadamia integrifolia (Macadamia nut).